The chain runs to 213 residues: Octanoyltransferase (213 aa).

Positions glutamate 32–proline 207 constitute a BPL/LPL catalytic domain. Residues arginine 71–histidine 78, serine 138–glycine 140, and glycine 151–alanine 153 each bind substrate. Cysteine 169 serves as the catalytic Acyl-thioester intermediate.

This sequence belongs to the LipB family.

Its subcellular location is the cytoplasm. The catalysed reaction is octanoyl-[ACP] + L-lysyl-[protein] = N(6)-octanoyl-L-lysyl-[protein] + holo-[ACP] + H(+). The protein operates within protein modification; protein lipoylation via endogenous pathway; protein N(6)-(lipoyl)lysine from octanoyl-[acyl-carrier-protein]: step 1/2. Functionally, catalyzes the transfer of endogenously produced octanoic acid from octanoyl-acyl-carrier-protein onto the lipoyl domains of lipoate-dependent enzymes. Lipoyl-ACP can also act as a substrate although octanoyl-ACP is likely to be the physiological substrate. This is Octanoyltransferase from Salmonella typhi.